A 463-amino-acid polypeptide reads, in one-letter code: DNA-binding protein K10 (463 aa).

A compositionally biased stretch (polar residues) spans 1-13 (MVSKNQFYQNWTM). Positions 1–304 (MVSKNQFYQN…RNGPGPGPMM (304 aa)) are disordered. Over residues 14-50 (QSQQQHPHQMQQQFQQQQQPNLQHRNNQSNNNNCNNN) the composition is skewed to low complexity. Residues 85 to 94 (QMMFSSSQMP) show a composition bias toward polar residues. 7 tandem repeats follow at residues 87 to 94 (MFSSSQMP), 95 to 102 (SDPLYIDF), 103 to 110 (SSPPPGFK), 111 to 118 (HNQVGSPK), 119 to 126 (KKSMKGIK), 127 to 134 (QQQHPSPN), and 135 to 142 (QQQPPSPN). The 7 X approximate tandem repeats stretch occupies residues 87 to 142 (MFSSSQMPSDPLYIDFSSPPPGFKHNQVGSPKKKSMKGIKQQQHPSPNQQQPPSPN). A compositionally biased stretch (low complexity) spans 142-193 (NQQQHPSPNQQQHPSPNQQQHPNSNQQQHLSPNQQQGKMNNQNNNHMNQSQQ). Polar residues predominate over residues 194–214 (PFNNQMNGSDWQRHPGNNPNQ). 2 stretches are compositionally biased toward pro residues: residues 225-270 (GPPP…PPVP) and 282-291 (GGPPPPPPPL). The segment at residues 397–416 (DELFAQYKGQRDKFVSLYEA) is a DNA-binding region (H-T-H motif). Residues 426–463 (AATVKAKDAKSDKDKNAISSQSAAPKAGSAKDATIPNP) form a disordered region. Residues 430–441 (KAKDAKSDKDKN) show a composition bias toward basic and acidic residues.

Interacts (via N-terminus) with sqd; the interaction is direct and may be involved in localization of sqd to the oocyte during oogenesis.

The protein resides in the nucleus. Functionally, may be involved in localization of sqd to the oocyte during oogenesis. This chain is DNA-binding protein K10 (fs(1)K10), found in Drosophila melanogaster (Fruit fly).